The primary structure comprises 155 residues: uncharacterized protein (155 aa).

The Macro domain occupies 1–155 (MIVKYIKGDI…IVIVDWEPLL (155 aa)).

This is an uncharacterized protein from Escherichia coli (Bacteriophage T4).